The chain runs to 1076 residues: Carbamoyl phosphate synthase large chain (1076 aa).

A carboxyphosphate synthetic domain region spans residues M1 to E402. Residues R129, R169, G175, G176, E208, V210, E215, G241, V242, H243, Q285, and E299 each coordinate ATP. Positions K133–V328 constitute an ATP-grasp 1 domain. Q285, E299, and N301 together coordinate Mg(2+). Mn(2+) contacts are provided by Q285, E299, and N301. Positions I403–A555 are oligomerization domain. The segment at L556–K939 is carbamoyl phosphate synthetic domain. In terms of domain architecture, ATP-grasp 2 spans A680–M871. 10 residues coordinate ATP: R716, K755, L757, E762, G787, V788, H789, S790, Q830, and E842. 3 residues coordinate Mg(2+): Q830, E842, and N844. Q830, E842, and N844 together coordinate Mn(2+). An MGS-like domain is found at M938 to S1076. Residues L940–S1076 are allosteric domain.

Belongs to the CarB family. In terms of assembly, composed of two chains; the small (or glutamine) chain promotes the hydrolysis of glutamine to ammonia, which is used by the large (or ammonia) chain to synthesize carbamoyl phosphate. Tetramer of heterodimers (alpha,beta)4. Mg(2+) is required as a cofactor. It depends on Mn(2+) as a cofactor.

It catalyses the reaction hydrogencarbonate + L-glutamine + 2 ATP + H2O = carbamoyl phosphate + L-glutamate + 2 ADP + phosphate + 2 H(+). It carries out the reaction hydrogencarbonate + NH4(+) + 2 ATP = carbamoyl phosphate + 2 ADP + phosphate + 2 H(+). Its pathway is amino-acid biosynthesis; L-arginine biosynthesis; carbamoyl phosphate from bicarbonate: step 1/1. It participates in pyrimidine metabolism; UMP biosynthesis via de novo pathway; (S)-dihydroorotate from bicarbonate: step 1/3. In terms of biological role, large subunit of the glutamine-dependent carbamoyl phosphate synthetase (CPSase). CPSase catalyzes the formation of carbamoyl phosphate from the ammonia moiety of glutamine, carbonate, and phosphate donated by ATP, constituting the first step of 2 biosynthetic pathways, one leading to arginine and/or urea and the other to pyrimidine nucleotides. The large subunit (synthetase) binds the substrates ammonia (free or transferred from glutamine from the small subunit), hydrogencarbonate and ATP and carries out an ATP-coupled ligase reaction, activating hydrogencarbonate by forming carboxy phosphate which reacts with ammonia to form carbamoyl phosphate. The protein is Carbamoyl phosphate synthase large chain of Archaeoglobus fulgidus (strain ATCC 49558 / DSM 4304 / JCM 9628 / NBRC 100126 / VC-16).